The following is a 268-amino-acid chain: Thymidylate synthase (268 aa).

DUMP is bound by residues arginine 26 and 131–132 (RR). Cysteine 151 serves as the catalytic Nucleophile. Residues 171–174 (RSAD), asparagine 182, and 212–214 (HIY) each bind dUMP. Aspartate 174 serves as a coordination point for (6R)-5,10-methylene-5,6,7,8-tetrahydrofolate. Serine 267 contacts (6R)-5,10-methylene-5,6,7,8-tetrahydrofolate.

The protein belongs to the thymidylate synthase family. Bacterial-type ThyA subfamily. Homodimer.

It is found in the cytoplasm. The catalysed reaction is dUMP + (6R)-5,10-methylene-5,6,7,8-tetrahydrofolate = 7,8-dihydrofolate + dTMP. The protein operates within pyrimidine metabolism; dTTP biosynthesis. Functionally, catalyzes the reductive methylation of 2'-deoxyuridine-5'-monophosphate (dUMP) to 2'-deoxythymidine-5'-monophosphate (dTMP) while utilizing 5,10-methylenetetrahydrofolate (mTHF) as the methyl donor and reductant in the reaction, yielding dihydrofolate (DHF) as a by-product. This enzymatic reaction provides an intracellular de novo source of dTMP, an essential precursor for DNA biosynthesis. The chain is Thymidylate synthase from Corynebacterium aurimucosum (strain ATCC 700975 / DSM 44827 / CIP 107346 / CN-1) (Corynebacterium nigricans).